Here is a 152-residue protein sequence, read N- to C-terminus: Xanthine-guanine phosphoribosyltransferase (152 aa).

5-phospho-alpha-D-ribose 1-diphosphate is bound by residues 37–38, Arg-69, and 88–96; these read RG and DDLVDTGGT. Arg-69 lines the GMP pocket. Asp-89 is a binding site for Mg(2+). Asp-92 and Ile-135 together coordinate guanine. Xanthine contacts are provided by Asp-92 and Ile-135. GMP contacts are provided by residues 92-96 and 134-135; these read DTGGT and WI.

It belongs to the purine/pyrimidine phosphoribosyltransferase family. XGPT subfamily. As to quaternary structure, homotetramer. The cofactor is Mg(2+).

The protein localises to the cell inner membrane. It carries out the reaction GMP + diphosphate = guanine + 5-phospho-alpha-D-ribose 1-diphosphate. The catalysed reaction is XMP + diphosphate = xanthine + 5-phospho-alpha-D-ribose 1-diphosphate. The enzyme catalyses IMP + diphosphate = hypoxanthine + 5-phospho-alpha-D-ribose 1-diphosphate. The protein operates within purine metabolism; GMP biosynthesis via salvage pathway; GMP from guanine: step 1/1. It functions in the pathway purine metabolism; XMP biosynthesis via salvage pathway; XMP from xanthine: step 1/1. In terms of biological role, purine salvage pathway enzyme that catalyzes the transfer of the ribosyl-5-phosphate group from 5-phospho-alpha-D-ribose 1-diphosphate (PRPP) to the N9 position of the 6-oxopurines guanine and xanthine to form the corresponding ribonucleotides GMP (guanosine 5'-monophosphate) and XMP (xanthosine 5'-monophosphate), with the release of PPi. To a lesser extent, also acts on hypoxanthine. This chain is Xanthine-guanine phosphoribosyltransferase, found in Escherichia coli O7:K1 (strain IAI39 / ExPEC).